We begin with the raw amino-acid sequence, 548 residues long: T-complex protein 1 subunit theta (548 aa).

The disordered stretch occupies residues 528-548; it reads ATGGPKPRGPKQQDEDDDGMA.

Belongs to the TCP-1 chaperonin family. In terms of assembly, heterooligomeric complex.

The protein resides in the cytoplasm. In terms of biological role, molecular chaperone; assists the folding of proteins upon ATP hydrolysis. Known to play a role, in vitro, in the folding of actin and tubulin. Required for correct subcellular localization of pgl-1. The sequence is that of T-complex protein 1 subunit theta from Caenorhabditis briggsae.